Consider the following 301-residue polypeptide: Structure-specific endonuclease subunit SLX1 (301 aa).

One can recognise a GIY-YIG domain in the interval alanine 12–lysine 95. The SLX1-type zinc-finger motif lies at cysteine 216–cysteine 283.

The protein belongs to the SLX1 family. In terms of assembly, forms a heterodimer with SLX4. The cofactor is a divalent metal cation.

It localises to the nucleus. Functionally, catalytic subunit of the SLX1-SLX4 structure-specific endonuclease that resolves DNA secondary structures generated during DNA repair and recombination. Has endonuclease activity towards branched DNA substrates, introducing single-strand cuts in duplex DNA close to junctions with ss-DNA. In Eremothecium gossypii (strain ATCC 10895 / CBS 109.51 / FGSC 9923 / NRRL Y-1056) (Yeast), this protein is Structure-specific endonuclease subunit SLX1.